The sequence spans 361 residues: MAGSQIGTLFQVATFGESHGLALGGVVDGCPAGLELSEADLQGDLNRRRPGQSRFTTQRQERDEVKILSGVFEGRTTGTPIGFIIENEDQRSKDYSEIKDKFRPGHADFTYWSKYGNRDYRGGGRSSARETAIRVAAGAIAKKLLRQAEGVTVRGALTGMGPVVIEPSRWDWAEVERNHFFSPDAGSVGEFEAYLEGIRKAGNSVGAFLEVHAEGVPIGLGEPVFDRLDADLAKAVMSINAVKGVEIGAGMASGHATGVDFADEMRPGVDARHPEFVRNHAGGILGGISTGQPIVIRFAVKPTSSILVPRQSVDVHGQACEVVTKGRHDPCVGIRAVPIAEAMVAMTLADHWLRWRASKPL.

Positions 48 and 54 each coordinate NADP(+). FMN is bound by residues 125–127 (RSS), 240–241 (NA), glycine 286, 301–305 (KPTSS), and arginine 327.

The protein belongs to the chorismate synthase family. Homotetramer. FMNH2 is required as a cofactor.

It carries out the reaction 5-O-(1-carboxyvinyl)-3-phosphoshikimate = chorismate + phosphate. The protein operates within metabolic intermediate biosynthesis; chorismate biosynthesis; chorismate from D-erythrose 4-phosphate and phosphoenolpyruvate: step 7/7. In terms of biological role, catalyzes the anti-1,4-elimination of the C-3 phosphate and the C-6 proR hydrogen from 5-enolpyruvylshikimate-3-phosphate (EPSP) to yield chorismate, which is the branch point compound that serves as the starting substrate for the three terminal pathways of aromatic amino acid biosynthesis. This reaction introduces a second double bond into the aromatic ring system. The chain is Chorismate synthase from Magnetococcus marinus (strain ATCC BAA-1437 / JCM 17883 / MC-1).